The chain runs to 346 residues: Biotin synthase (346 aa).

The Radical SAM core domain maps to 38-256; the sequence is QQVQVSTLLS…IAVARIMMPT (219 aa). Positions 53, 57, and 60 each coordinate [4Fe-4S] cluster. [2Fe-2S] cluster-binding residues include C97, C128, C188, and R260.

Belongs to the radical SAM superfamily. Biotin synthase family. As to quaternary structure, homodimer. The cofactor is [4Fe-4S] cluster. Requires [2Fe-2S] cluster as cofactor.

The enzyme catalyses (4R,5S)-dethiobiotin + (sulfur carrier)-SH + 2 reduced [2Fe-2S]-[ferredoxin] + 2 S-adenosyl-L-methionine = (sulfur carrier)-H + biotin + 2 5'-deoxyadenosine + 2 L-methionine + 2 oxidized [2Fe-2S]-[ferredoxin]. It functions in the pathway cofactor biosynthesis; biotin biosynthesis; biotin from 7,8-diaminononanoate: step 2/2. In terms of biological role, catalyzes the conversion of dethiobiotin (DTB) to biotin by the insertion of a sulfur atom into dethiobiotin via a radical-based mechanism. This Salmonella agona (strain SL483) protein is Biotin synthase.